A 407-amino-acid chain; its full sequence is Serine/threonine transporter SstT (407 aa).

A run of 9 helical transmembrane segments spans residues Gly-12–Ser-32, Leu-42–Ile-62, Ile-81–Phe-101, Ala-141–Leu-161, Val-179–Ala-199, Ile-218–Phe-238, Phe-245–Ala-267, Ile-288–Leu-308, and Ile-330–Ile-350.

This sequence belongs to the dicarboxylate/amino acid:cation symporter (DAACS) (TC 2.A.23) family.

It is found in the cell inner membrane. The enzyme catalyses L-serine(in) + Na(+)(in) = L-serine(out) + Na(+)(out). The catalysed reaction is L-threonine(in) + Na(+)(in) = L-threonine(out) + Na(+)(out). Its function is as follows. Involved in the import of serine and threonine into the cell, with the concomitant import of sodium (symport system). The sequence is that of Serine/threonine transporter SstT from Campylobacter jejuni subsp. jejuni serotype O:6 (strain 81116 / NCTC 11828).